Reading from the N-terminus, the 490-residue chain is MIPVVALVGRPNVGKSTLFNRLTRTRDALVADFPGLTRDRKYGRAHLAGYEFIVVDTGGIDGTEEGIETRMAEQSLAAIEEADVVLFLTDARAGLTAADLAIAQHLRSREKTTFVVANKVDGIDADSACAEFWSLGLGEVYQMAAAQGRGVTNMIEYSLAPYAEAMGIVKQEDGDDDEEEREYTEEQAEAEQKRLQDLPIKLAIIGKPNVGKSTLTNRILGEERVVVYDEPGTTRDSIYIPMERQGREYVLIDTAGVRRRSKVHETVEKFSVIKTLKAVEDSNVVLLVIDAREGIAEQDLGLLGFVLNAGRALVIAINKWDGIDQNIKDRVKTELDRRLGFIDFARIHFISALHGTGVGHLFESIEEAYDSATRRVSTSMLTRIMQMSQDDHQPPLVNGRRVKLKYAHAGGYNPPIVVVHGNQVKKLPDSYKRYMMNYFRRSLKVIGTPIQLRFQEGGNPFEGMNSKKLTVSQERRRKRMVGHIRDKNKD.

EngA-type G domains follow at residues 3–166 and 200–373; these read PVVA…AEAM and IKLA…DSAT. GTP is bound by residues 9–16, 56–60, 118–121, 206–213, 253–257, and 318–321; these read GRPNVGKS, DTGGI, NKVD, GKPNVGKS, DTAGV, and NKWD. The KH-like domain occupies 374–458; the sequence is RRVSTSMLTR…PIQLRFQEGG (85 aa). Positions 470–490 are disordered; the sequence is TVSQERRRKRMVGHIRDKNKD.

It belongs to the TRAFAC class TrmE-Era-EngA-EngB-Septin-like GTPase superfamily. EngA (Der) GTPase family. As to quaternary structure, associates with the 50S ribosomal subunit.

GTPase that plays an essential role in the late steps of ribosome biogenesis. The protein is GTPase Der of Shewanella pealeana (strain ATCC 700345 / ANG-SQ1).